The sequence spans 282 residues: sn-glycerol-3-phosphate transport system permease protein UgpE (282 aa).

6 consecutive transmembrane segments (helical) span residues 14–34 (LILILGIIIVAFPIYYTFVAS), 86–106 (MAIAVGKIIISFMSAFAIVFF), 112–132 (MFFFWMIFITLMLPVEVRILP), 146–168 (YAGLTLPLMASATATFLFRQFFL), 201–221 (IAALFVILFIYGWTQYLWPLL), and 248–268 (WNYVMVTAILAIIPLILVVVL). Positions 78 to 269 (LWNSFVVAMA…IPLILVVVLM (192 aa)) constitute an ABC transmembrane type-1 domain.

Belongs to the binding-protein-dependent transport system permease family. The complex is composed of two ATP-binding proteins (UgpC), two transmembrane proteins (UgpA and UgpE) and a solute-binding protein (UgpB).

Its subcellular location is the cell inner membrane. Functionally, part of the ABC transporter complex UgpBAEC involved in sn-glycerol-3-phosphate (G3P) import. Probably responsible for the translocation of the substrate across the membrane. This Brucella abortus (strain 2308) protein is sn-glycerol-3-phosphate transport system permease protein UgpE (ugpE).